The sequence spans 378 residues: Cln5-like protein 1 (378 aa).

A signal peptide spans 1–20; it reads MNKIIIFILFLISILQSVRG. N-linked (GlcNAc...) asparagine glycans are attached at residues N63, N93, N135, N181, N220, N226, N254, and N280. A helical membrane pass occupies residues 308 to 328; sequence WIFIIILLSFTTVYLVGGILI.

The protein belongs to the CLN5 family.

Its subcellular location is the membrane. The protein is Cln5-like protein 1 (cln5la) of Dictyostelium discoideum (Social amoeba).